We begin with the raw amino-acid sequence, 249 residues long: Segregation and condensation protein A (249 aa).

It belongs to the ScpA family. Component of a cohesin-like complex composed of ScpA, ScpB and the Smc homodimer, in which ScpA and ScpB bind to the head domain of Smc. The presence of the three proteins is required for the association of the complex with DNA.

Its subcellular location is the cytoplasm. Its function is as follows. Participates in chromosomal partition during cell division. May act via the formation of a condensin-like complex containing Smc and ScpB that pull DNA away from mid-cell into both cell halves. This Oceanobacillus iheyensis (strain DSM 14371 / CIP 107618 / JCM 11309 / KCTC 3954 / HTE831) protein is Segregation and condensation protein A.